The following is a 230-amino-acid chain: Large ribosomal subunit protein uL1 (230 aa).

It belongs to the universal ribosomal protein uL1 family. As to quaternary structure, part of the 50S ribosomal subunit.

Its function is as follows. Binds directly to 23S rRNA. The L1 stalk is quite mobile in the ribosome, and is involved in E site tRNA release. Protein L1 is also a translational repressor protein, it controls the translation of the L11 operon by binding to its mRNA. In Leptospira interrogans serogroup Icterohaemorrhagiae serovar copenhageni (strain Fiocruz L1-130), this protein is Large ribosomal subunit protein uL1.